The primary structure comprises 610 residues: Glutamine--fructose-6-phosphate aminotransferase [isomerizing] (610 aa).

Catalysis depends on Cys-2, which acts as the Nucleophile; for GATase activity. A Glutamine amidotransferase type-2 domain is found at 2 to 218 (CGIVGAVAQR…EGDVAEITRR (217 aa)). 2 consecutive SIS domains span residues 286-426 (AAEI…QQGR) and 459-600 (LATD…VDQP). The active-site For Fru-6P isomerization activity is Lys-605.

As to quaternary structure, homodimer.

The protein localises to the cytoplasm. It catalyses the reaction D-fructose 6-phosphate + L-glutamine = D-glucosamine 6-phosphate + L-glutamate. Functionally, catalyzes the first step in hexosamine metabolism, converting fructose-6P into glucosamine-6P using glutamine as a nitrogen source. The sequence is that of Glutamine--fructose-6-phosphate aminotransferase [isomerizing] from Vibrio vulnificus (strain YJ016).